Reading from the N-terminus, the 338-residue chain is Ketol-acid reductoisomerase (NADP(+)) (338 aa).

In terms of domain architecture, KARI N-terminal Rossmann spans methionine 1–threonine 181. NADP(+)-binding positions include tyrosine 24–glutamine 27, arginine 47, and serine 52. Histidine 107 is a catalytic residue. Glycine 133 contacts NADP(+). One can recognise a KARI C-terminal knotted domain in the interval asparagine 182–isoleucine 327. Mg(2+) is bound by residues aspartate 190, glutamate 194, glutamate 226, and glutamate 230. Serine 251 is a binding site for substrate.

This sequence belongs to the ketol-acid reductoisomerase family. Requires Mg(2+) as cofactor.

The enzyme catalyses (2R)-2,3-dihydroxy-3-methylbutanoate + NADP(+) = (2S)-2-acetolactate + NADPH + H(+). It carries out the reaction (2R,3R)-2,3-dihydroxy-3-methylpentanoate + NADP(+) = (S)-2-ethyl-2-hydroxy-3-oxobutanoate + NADPH + H(+). The protein operates within amino-acid biosynthesis; L-isoleucine biosynthesis; L-isoleucine from 2-oxobutanoate: step 2/4. Its pathway is amino-acid biosynthesis; L-valine biosynthesis; L-valine from pyruvate: step 2/4. Involved in the biosynthesis of branched-chain amino acids (BCAA). Catalyzes an alkyl-migration followed by a ketol-acid reduction of (S)-2-acetolactate (S2AL) to yield (R)-2,3-dihydroxy-isovalerate. In the isomerase reaction, S2AL is rearranged via a Mg-dependent methyl migration to produce 3-hydroxy-3-methyl-2-ketobutyrate (HMKB). In the reductase reaction, this 2-ketoacid undergoes a metal-dependent reduction by NADPH to yield (R)-2,3-dihydroxy-isovalerate. The chain is Ketol-acid reductoisomerase (NADP(+)) from Polaromonas sp. (strain JS666 / ATCC BAA-500).